The chain runs to 426 residues: Gamma-glutamyl phosphate reductase (426 aa).

The protein belongs to the gamma-glutamyl phosphate reductase family.

It localises to the cytoplasm. The catalysed reaction is L-glutamate 5-semialdehyde + phosphate + NADP(+) = L-glutamyl 5-phosphate + NADPH + H(+). Its pathway is amino-acid biosynthesis; L-proline biosynthesis; L-glutamate 5-semialdehyde from L-glutamate: step 2/2. Its function is as follows. Catalyzes the NADPH-dependent reduction of L-glutamate 5-phosphate into L-glutamate 5-semialdehyde and phosphate. The product spontaneously undergoes cyclization to form 1-pyrroline-5-carboxylate. The polypeptide is Gamma-glutamyl phosphate reductase (Delftia acidovorans (strain DSM 14801 / SPH-1)).